The sequence spans 896 residues: MEVQLGLGRVYPRPPSKTFRGAFQNLFQSVREVIQNPGPRHPEAASAAPPGARLQQQQLQQQETSPRRQQQQQQQPSEDGSPQVQSRGPTGYLALDEKQQPSQQQSAPECHPESGCTPEPGAASAASKGLQQQPPAPPDEDDSAAPSTLSLLGPTFPGLSSCSTDLKDILSEAGTMQLLQQQQQQQQQQEAVSEGNSSGRAREATGAPISSKDSYLGGSSTISDSAKELCKAVSVSMGLGVEALEHLSPGEQLRGDCMYAPLLTGPPSVRPTPCAPLAECKGSLLDDGPGKSNEETAEYSPFKAGYTKGLDSESLGCSSGGEAGGSGTLELPSALSLYKSGALDDVAAYPSRDYYNFPLALAGPPPPPPPPHPHARIKLENPLDYGSAWAAAAAQCRYGDLASLHGGGAPGPGSGSPSATSSSSWHTLFTAEESQLYGPCGGGGGGSAGEAGAVAPYGYTRPPQGLAGQEGDLAIPDIWYPGGVVSRVPYPSPSCVKSEMGPWMESYSGPYGDMRLEPTRDHVLPIDYYFPPQKTCLICGDEASGCHYGALTCGSCKVFFKRAAEGKQKYLCASRNDCTIDKFRRKNCPSCRLRKCYEAGMTLGARKLKKLGNLKLQEEGEASSATSPTEEPAQKLTVSHIEGYECQPIFLNVLEAIEPGVVCAGHDNNQPDSFAALLSSLNELGERQLVHVVKWAKALPGFRNLHVDDQMAVIQYSWMGLMVFAMGWRSFTNVNSRMLYFAPDLVFNEYRMHKSRMYSQCVRMRHLSQEFGWLQITPQEFLCMKALLLFSIIPVDGLKNQKFFDELRMNYIKELDRIIACKRKNPTSCSRRFYQLTKLLDSVQPIARELHQFTFDLLIKSHMVSVDFPEMMAEIISVQVPKILSGKVKPIYFHTQ.

Positions 1–534 (MEVQLGLGRV…PIDYYFPPQK (534 aa)) are modulating. An interaction with ZNF318 region spans residues 1–563 (MEVQLGLGRV…GSCKVFFKRA (563 aa)). Disordered regions lie at residues 35–152 (QNPG…LSLL) and 178–218 (LLQQ…YLGG). Over residues 54-78 (LQQQQLQQQETSPRRQQQQQQQPSE) the composition is skewed to low complexity. S65 is subject to Phosphoserine; by CDK9. The residue at position 81 (S81) is a Phosphoserine. Low complexity predominate over residues 178–189 (LLQQQQQQQQQQ). Residues 190 to 199 (EAVSEGNSSG) are compositionally biased toward polar residues. Y215 carries the post-translational modification Phosphotyrosine; by CSK. S248 is modified (phosphoserine). The residue at position 259 (Y259) is a Phosphotyrosine; by CSK and TNK2. A phosphotyrosine; by CSK mark is found at Y299, Y338, Y349, and Y354. Y355 carries the post-translational modification Phosphotyrosine; by CSK and TNK2. Residue K378 forms a Glycyl lysine isopeptide (Lys-Gly) (interchain with G-Cter in SUMO) linkage. Residue Y385 is modified to Phosphotyrosine; by CSK. A Glycyl lysine isopeptide (Lys-Gly) (interchain with G-Cter in SUMO) cross-link involves residue K497. 2 positions are modified to phosphotyrosine; by CSK: Y511 and Y528. The tract at residues 528 to 895 (YYFPPQKTCL…GKVKPIYFHT (368 aa)) is interaction with LPXN. Positions 535–608 (TCLICGDEAS…AGMTLGARKL (74 aa)) form a DNA-binding region, nuclear receptor. NR C4-type zinc fingers lie at residues 536–556 (CLICGDEASGCHYGALTCGSC) and 572–596 (CASRNDCTIDKFRRKNCPSCRLRKC). The interval 548–638 (YGALTCGSCK…TEEPAQKLTV (91 aa)) is interaction with HIPK3. An interaction with CCAR1 region spans residues 568 to 895 (QKYLCASRND…GKVKPIYFHT (328 aa)). The interval 601-895 (MTLGARKLKK…GKVKPIYFHT (295 aa)) is interaction with KAT7. S627 bears the Phosphoserine; by STK4/MST1 mark. Positions 645-876 (ECQPIFLNVL…DFPEMMAEII (232 aa)) constitute an NR LBD domain. 2 residues coordinate 17beta-hydroxy-5alpha-androstan-3-one: N682 and R729. Glycyl lysine isopeptide (Lys-Gly) (interchain with G-Cter in ubiquitin) cross-links involve residues K822 and K824. A 17beta-hydroxy-5alpha-androstan-3-one-binding site is contributed by T854. Y892 carries the post-translational modification Phosphotyrosine; by CSK.

It belongs to the nuclear hormone receptor family. NR3 subfamily. As to quaternary structure, binds DNA as a homodimer. Part of a ternary complex containing AR, EFCAB6/DJBP and PARK7. Interacts with HIPK3 and NR0B2 in the presence of androgen. The ligand binding domain interacts with KAT7/HBO1 in the presence of dihydrotestosterone. Interacts with EFCAB6/DJBP, PQBP1, RANBP9, RBAK, SPDEF, SRA1, TGFB1I1 and RREB1. Interacts with ZMIZ1/ZIMP10 and ZMIZ2/ZMIP7 which both enhance its transactivation activity. Interacts with SLC30A9 and RAD54L2/ARIP4. Interacts with MACROD1 (via macro domain). Interacts via the ligand-binding domain with LXXLL and FXXLF motifs from NCOA1, NCOA2, NCOA3 and MAGEA11. Interacts (via nuclear receptor DNA binding domain and nuclear receptor ligand binding domain) with NCOA4. The AR N-terminal poly-Gln region binds Ran resulting in enhancement of AR-mediated transactivation. Ran-binding decreases as the poly-Gln length increases. Interacts with HIP1 (via coiled coil domain). Interacts (via ligand-binding domain) with TRIM68. Interacts with TNK2. Interacts with USP26. Interacts with RNF6. Interacts (regulated by RNF6 probably through polyubiquitination) with RNF14; regulates AR transcriptional activity. Interacts with PRMT2 and TRIM24. Interacts with RACK1. Interacts with RANBP10; this interaction enhances dihydrotestosterone-induced AR transcriptional activity. Interacts with PRPF6 in a hormone-independent way; this interaction enhances dihydrotestosterone-induced AR transcriptional activity. Interacts with STK4/MST1. Interacts with ZIPK/DAPK3. Interacts with LPXN. Interacts with MAK. Part of a complex containing AR, MAK and NCOA3. Interacts with CRY1. Interacts with CCAR1 and GATA2. Interacts with ZNF318. Interacts with BUD31. Interacts with ARID4A. Interacts with ARID4B. Interacts (via NR LBD domain) with ZBTB7A; the interaction is direct and androgen-dependent. Interacts with NCOR1. Interacts with NCOR2. Interacts with CRY2 in a ligand-dependent manner. In terms of processing, phosphorylated in prostate cancer cells in response to several growth factors including EGF. Phosphorylation is induced by c-Src kinase (CSK). Tyr-511 is one of the major phosphorylation sites and an increase in phosphorylation and Src kinase activity is associated with prostate cancer progression. Phosphorylation by TNK2 enhances the DNA-binding and transcriptional activity. Phosphorylation at Ser-65 by CDK9 regulates AR promoter selectivity and cell growth. Sumoylated on Lys-378 (major) and Lys-497. Ubiquitinated. Deubiquitinated by USP26. 'Lys-6' and 'Lys-27'-linked polyubiquitination by RNF6 modulates AR transcriptional activity and specificity. Post-translationally, palmitoylated by ZDHHC7 and ZDHHC21. Palmitoylation is required for plasma membrane targeting and for rapid intracellular signaling via ERK and AKT kinases and cAMP generation.

It is found in the nucleus. It localises to the cytoplasm. Steroid hormone receptors are ligand-activated transcription factors that regulate eukaryotic gene expression and affect cellular proliferation and differentiation in target tissues. Transcription factor activity is modulated by bound coactivator and corepressor proteins like ZBTB7A that recruits NCOR1 and NCOR2 to the androgen response elements/ARE on target genes, negatively regulating androgen receptor signaling and androgen-induced cell proliferation. Transcription activation is also down-regulated by NR0B2. Activated, but not phosphorylated, by HIPK3 and ZIPK/DAPK3. The protein is Androgen receptor (AR) of Sus scrofa (Pig).